The chain runs to 497 residues: Protein nucleotidyltransferase YdiU (497 aa).

ATP-binding residues include Gly-92, Gly-94, Arg-95, Lys-114, Asp-126, Gly-127, Arg-177, and Arg-184. Asp-261 (proton acceptor) is an active-site residue. Mg(2+) contacts are provided by Asn-262 and Asp-271. Position 271 (Asp-271) interacts with ATP.

This sequence belongs to the SELO family. Mg(2+) is required as a cofactor. Requires Mn(2+) as cofactor.

The enzyme catalyses L-seryl-[protein] + ATP = 3-O-(5'-adenylyl)-L-seryl-[protein] + diphosphate. It catalyses the reaction L-threonyl-[protein] + ATP = 3-O-(5'-adenylyl)-L-threonyl-[protein] + diphosphate. It carries out the reaction L-tyrosyl-[protein] + ATP = O-(5'-adenylyl)-L-tyrosyl-[protein] + diphosphate. The catalysed reaction is L-histidyl-[protein] + UTP = N(tele)-(5'-uridylyl)-L-histidyl-[protein] + diphosphate. The enzyme catalyses L-seryl-[protein] + UTP = O-(5'-uridylyl)-L-seryl-[protein] + diphosphate. It catalyses the reaction L-tyrosyl-[protein] + UTP = O-(5'-uridylyl)-L-tyrosyl-[protein] + diphosphate. Functionally, nucleotidyltransferase involved in the post-translational modification of proteins. It can catalyze the addition of adenosine monophosphate (AMP) or uridine monophosphate (UMP) to a protein, resulting in modifications known as AMPylation and UMPylation. This is Protein nucleotidyltransferase YdiU from Bordetella petrii (strain ATCC BAA-461 / DSM 12804 / CCUG 43448).